Consider the following 238-residue polypeptide: Cysteine-rich venom protein (238 aa).

The N-terminal stretch at 1–19 (MIAFIVLLSLAAVLQQSSG) is a signal peptide. An SCP domain is found at 38–164 (VDKHNALRRS…STKYLYVCQY (127 aa)). 8 disulfide bridges follow: Cys-75/Cys-153, Cys-92/Cys-165, Cys-148/Cys-162, Cys-184/Cys-191, Cys-187/Cys-196, Cys-200/Cys-233, Cys-209/Cys-227, and Cys-218/Cys-231. One can recognise a ShKT domain in the interval 200–233 (CKYEDAFTNCNELAKETKCKTEWIKSKCPATCFC).

This sequence belongs to the CRISP family. In terms of tissue distribution, expressed by the venom gland.

Its subcellular location is the secreted. Its function is as follows. Blocks olfactory (CNGA2) and retinal (CNGA1) CNG channel currents. Does not affect neither depolarization- nor caffeine-induced contraction of smooth muscle. The polypeptide is Cysteine-rich venom protein (Drysdalia coronoides (White-lipped snake)).